The primary structure comprises 197 residues: Phosphoheptose isomerase (197 aa).

The SIS domain maps to methionine 34–glutamine 196. Asparagine 49–glycine 51 lines the substrate pocket. Histidine 58 and glutamate 62 together coordinate Zn(2+). Residues glutamate 62, asparagine 91–aspartate 92, serine 117–serine 119, serine 122, and glutamine 172 each bind substrate. Positions 172 and 180 each coordinate Zn(2+).

Belongs to the SIS family. GmhA subfamily. In terms of assembly, homotetramer. It depends on Zn(2+) as a cofactor.

Its subcellular location is the cytoplasm. The enzyme catalyses 2 D-sedoheptulose 7-phosphate = D-glycero-alpha-D-manno-heptose 7-phosphate + D-glycero-beta-D-manno-heptose 7-phosphate. Its pathway is carbohydrate biosynthesis; D-glycero-D-manno-heptose 7-phosphate biosynthesis; D-glycero-alpha-D-manno-heptose 7-phosphate and D-glycero-beta-D-manno-heptose 7-phosphate from sedoheptulose 7-phosphate: step 1/1. In terms of biological role, catalyzes the isomerization of sedoheptulose 7-phosphate in D-glycero-D-manno-heptose 7-phosphate. The protein is Phosphoheptose isomerase of Shewanella piezotolerans (strain WP3 / JCM 13877).